The primary structure comprises 221 residues: GTP cyclohydrolase III (221 aa).

Belongs to the archaeal-type GTP cyclohydrolase family.

The enzyme catalyses GTP + 3 H2O = 2-amino-5-formylamino-6-(5-phospho-D-ribosylamino)pyrimidin-4(3H)-one + 2 phosphate + 2 H(+). Catalyzes the formation of 2-amino-5-formylamino-6-ribofuranosylamino-4(3H)-pyrimidinone ribonucleotide monophosphate and inorganic phosphate from GTP. Also has an independent pyrophosphate phosphohydrolase activity. The polypeptide is GTP cyclohydrolase III (Pyrobaculum calidifontis (strain DSM 21063 / JCM 11548 / VA1)).